Reading from the N-terminus, the 886-residue chain is DNA mismatch repair protein MutS (886 aa).

Position 641-648 (641-648) interacts with ATP; the sequence is GPNMAGKS.

This sequence belongs to the DNA mismatch repair MutS family.

Its function is as follows. This protein is involved in the repair of mismatches in DNA. It is possible that it carries out the mismatch recognition step. This protein has a weak ATPase activity. This Rickettsia felis (strain ATCC VR-1525 / URRWXCal2) (Rickettsia azadi) protein is DNA mismatch repair protein MutS.